Consider the following 953-residue polypeptide: Translation initiation factor IF-2 (953 aa).

Disordered stretches follow at residues 48 to 212 (SSFS…KIDF) and 279 to 367 (TKLK…FHEL). 3 stretches are compositionally biased toward basic and acidic residues: residues 80 to 89 (TGSEHVEKTQ), 98 to 111 (FKAE…EQAA), and 140 to 188 (QGDK…ENHK). Polar residues-rich tracts occupy residues 191-207 (RFTN…QSKS) and 282-291 (KSSNISAKST). Residues 300 to 317 (ARPEKNRELTHHSQEGQK) show a composition bias toward basic and acidic residues. Low complexity predominate over residues 322–338 (SWNSQNQVRNQKNSNWN). The span at 339 to 348 (KNKKTKKGKN) shows a compositional bias: basic residues. Positions 454–623 (ERAPVVTIMG…LLVAEVEELK (170 aa)) constitute a tr-type G domain. The segment at 463 to 470 (GHVDHGKT) is G1. A GTP-binding site is contributed by 463 to 470 (GHVDHGKT). Positions 488 to 492 (GITQH) are G2. The G3 stretch occupies residues 509 to 512 (DTPG). Residues 509–513 (DTPGH) and 563–566 (NKID) contribute to the GTP site. The segment at 563–566 (NKID) is G4. Residues 599–601 (SAK) are G5.

The protein belongs to the TRAFAC class translation factor GTPase superfamily. Classic translation factor GTPase family. IF-2 subfamily.

The protein localises to the cytoplasm. In terms of biological role, one of the essential components for the initiation of protein synthesis. Protects formylmethionyl-tRNA from spontaneous hydrolysis and promotes its binding to the 30S ribosomal subunits. Also involved in the hydrolysis of GTP during the formation of the 70S ribosomal complex. This Streptococcus pyogenes serotype M3 (strain ATCC BAA-595 / MGAS315) protein is Translation initiation factor IF-2.